Reading from the N-terminus, the 306-residue chain is Ribonuclease BN (306 aa).

Residues H64, H66, D68, H69, H141, D212, and H270 each coordinate Zn(2+). D68 acts as the Proton acceptor in catalysis.

This sequence belongs to the RNase Z family. RNase BN subfamily. In terms of assembly, homodimer. It depends on Zn(2+) as a cofactor.

Functionally, zinc phosphodiesterase, which has both exoribonuclease and endoribonuclease activities. This Klebsiella pneumoniae (strain 342) protein is Ribonuclease BN.